Consider the following 422-residue polypeptide: Replication factor C large subunit (422 aa).

63–70 (GPPGIGKT) serves as a coordination point for ATP.

It belongs to the activator 1 small subunits family. RfcL subfamily. Heteromultimer composed of small subunits (RfcS) and large subunits (RfcL).

Part of the RFC clamp loader complex which loads the PCNA sliding clamp onto DNA. The chain is Replication factor C large subunit from Pyrobaculum neutrophilum (strain DSM 2338 / JCM 9278 / NBRC 100436 / V24Sta) (Thermoproteus neutrophilus).